A 441-amino-acid polypeptide reads, in one-letter code: Ribosomal protein uS12 methylthiotransferase RimO (441 aa).

Residues 6-116 (PKVGFVSLGC…VMTAVHANLP (111 aa)) enclose the MTTase N-terminal domain. Positions 15, 51, 80, 147, 151, and 154 each coordinate [4Fe-4S] cluster. One can recognise a Radical SAM core domain in the interval 133–370 (LTPQHYAYLK…MEVQESISAE (238 aa)). One can recognise a TRAM domain in the interval 373 to 439 (RRKIGRIETV…GHDLWAAPPA (67 aa)).

The protein belongs to the methylthiotransferase family. RimO subfamily. It depends on [4Fe-4S] cluster as a cofactor.

The protein localises to the cytoplasm. The catalysed reaction is L-aspartate(89)-[ribosomal protein uS12]-hydrogen + (sulfur carrier)-SH + AH2 + 2 S-adenosyl-L-methionine = 3-methylsulfanyl-L-aspartate(89)-[ribosomal protein uS12]-hydrogen + (sulfur carrier)-H + 5'-deoxyadenosine + L-methionine + A + S-adenosyl-L-homocysteine + 2 H(+). Functionally, catalyzes the methylthiolation of an aspartic acid residue of ribosomal protein uS12. This Methylobacillus flagellatus (strain ATCC 51484 / DSM 6875 / VKM B-1610 / KT) protein is Ribosomal protein uS12 methylthiotransferase RimO.